The primary structure comprises 473 residues: H(+)/Cl(-) exchange transporter ClcA (473 aa).

Over 1 to 32 the chain is Cytoplasmic; it reads MKTDTPTFEAQQIVRLRRGRLIRRLVQRDKTP. Residues 33 to 69 form a helical membrane-spanning segment; the sequence is LAILLMAAVVGTLTGLVGVAFEKAVSWVQNMRIGALV. The Periplasmic segment spans residues 70–76; the sequence is QVADHAF. Residues 77 to 100 traverse the membrane as a helical segment; that stretch reads LLWPLAFILSALLAMVGYFLVRKF. Residues 106–110 carry the Selectivity filter part_1 motif; sequence GSGIP. Ser107 is a binding site for chloride. Positions 109–116 form an intramembrane region, helical; sequence IPEIEGAL. Topologically, residues 117-123 are cytoplasmic; that stretch reads EELRPVR. 2 helical membrane-spanning segments follow: residues 124 to 141 and 148 to 166; these read WWRVLPVKFIGGMGTLGA and EGPTVQIGGNLGRMVLDVF. Residues 146-150 carry the Selectivity filter part_2 motif; it reads GREGP. The Cytoplasmic portion of the chain corresponds to 167-176; sequence RMRSAEARHT. 2 consecutive intramembrane regions (helical) follow at residues 177-189 and 193-201; these read LLATGAAAGLSAA and PLAGILFII. The Cytoplasmic portion of the chain corresponds to 202-214; it reads EEMRPQFRYNLIS. A helical transmembrane segment spans residues 215-232; that stretch reads IKAVFTGVIMSSIVFRIF. Residues 233-252 lie on the Periplasmic side of the membrane; sequence NGEAPIIEVGKLSNAPVNTL. The chain crosses the membrane as a helical span at residues 253-281; it reads WLYLVLGIIFGCVGPVFNTLVLRTQDMFQ. Over 282-287 the chain is Cytoplasmic; sequence RFHGGE. Residues 288–309 form a helical membrane-spanning segment; it reads IKKWVLMGGAIGGLCGILGLIE. Over 310 to 329 the chain is Periplasmic; the sequence is PEAAGGGFNLIPIAAAGNFS. 2 helical membrane-spanning segments follow: residues 330–349 and 355–376; these read VGLLLFIFITRVVTTLLCFS and GIFAPMLALGTLLGTAFGMAAA. Positions 355-359 match the Selectivity filter part_3 motif; that stretch reads GIFAP. Positions 356 and 357 each coordinate chloride. Residues 377–386 lie on the Periplasmic side of the membrane; it reads VLFPQYHLEA. The helical intramembrane region spans 387 to 401; that stretch reads GTFAIAGMGALMAAS. Residues 402 to 404 constitute an intramembrane region (note=Loop between two helices); that stretch reads VRA. The helical intramembrane region spans 405 to 416; that stretch reads PLTGIVLVLEMT. An intramembrane region (note=Loop between two helices) is located at residues 417-421; sequence DNYQL. The chain crosses the membrane as a helical span at residues 422–438; the sequence is ILPMIITCLGATLLAQF. Over 439-473 the chain is Cytoplasmic; that stretch reads LGGKPLYSTILARTLAKQDAEQAAKNQSTPAGENT. Tyr445 is a binding site for chloride.

This sequence belongs to the chloride channel (TC 2.A.49) family. ClcA subfamily. Homodimer.

Its subcellular location is the cell inner membrane. The catalysed reaction is 2 chloride(in) + H(+)(out) = 2 chloride(out) + H(+)(in). Proton-coupled chloride transporter. Functions as antiport system and exchanges two chloride ions for 1 proton. Probably acts as an electrical shunt for an outwardly-directed proton pump that is linked to amino acid decarboxylation, as part of the extreme acid resistance (XAR) response. The polypeptide is H(+)/Cl(-) exchange transporter ClcA (Salmonella arizonae (strain ATCC BAA-731 / CDC346-86 / RSK2980)).